Reading from the N-terminus, the 260-residue chain is MAGSPLLCGPRAGGVGLLVLLLLGLLRLPPTLSARPVKEPRSLSAASAPLAETSTPLRLRRAVPRGEAAGAVQELARALAHLLEAERQERARAEAQEAEDQQARVLAQLLRAWGSPRASDPPLAPDDDPDAPAAQLARALLRARLDPAALAAQLVPAPAPAAALRPRPPVYDDGPTGPDVEDAADETPDVDPELLRYLLGRILTGSSEPEAAPAPRRLRRAVDQDLGPEVPPENVLGALLRVKRLENSSPQAPARRLLPP.

The signal sequence occupies residues 1-33 (MAGSPLLCGPRAGGVGLLVLLLLGLLRLPPTLS). The proSAAS(1-180) stretch occupies residues 34 to 215 (ARPVKEPRSL…SSEPEAAPAP (182 aa)). 2 disordered regions span residues 162–187 (AALRPRPPVYDDGPTGPDVEDAADET) and 206–234 (SSEPEAAPAPRRLRRAVDQDLGPEVPPEN). Residues 221–260 (AVDQDLGPEVPPENVLGALLRVKRLENSSPQAPARRLLPP) form a C-terminal inhibitory domain; interacts with PCSK1 region. The Sufficient for inhibition of PCSK1 signature appears at 239–244 (LLRVKR).

Interacts via the C-terminal inhibitory domain with PCSK1 65 kDa form. Proteolytically cleaved in the Golgi. Big SAAS, Little SAAS, PEN and Big LEN are the major processed peptides in proSAAS-overexpressing PC-12 phaeochromocytoma cells (lacking PCSK1 and PCSK2 endopeptidases). Peptides corresponding to PEN and a proSAAS aa 40-59 have been detected in wild-type PC-12 cells. In terms of tissue distribution, expressed in adult brain (all major structural regions), adrenal gland (medulla) and spinal cord (dorsal and ventral horn). Expressed in pancreatic islands.

The protein resides in the secreted. It localises to the golgi apparatus. It is found in the trans-Golgi network. May function in the control of the neuroendocrine secretory pathway. Proposed be a specific endogenous inhibitor of PCSK1. ProSAAS and Big PEN-LEN, both containing the C-terminal inhibitory domain, but not the processed peptides reduce PCSK1 activity in the endoplasmic reticulum and Golgi. It reduces the activity of the 87 kDa form but not the autocatalytically derived 65 kDa form of PCSK1. Subsequent processing of proSAAS may eliminate the inhibition. Slows down convertase-mediated processing of proopiomelanocortin and proenkephalin. May control the intracellular timing of PCSK1 rather than its total level of activity. In terms of biological role, endogenous ligand for GPR171. Neuropeptide involved in the regulation of feeding. The sequence is that of ProSAAS (Pcsk1n) from Rattus norvegicus (Rat).